The sequence spans 1745 residues: Tight junction protein 1 (1745 aa).

A PDZ 1 domain is found at 23-110; sequence TVTLHRAPGF…NAKITIRRKK (88 aa). The segment covering 102-112 has biased composition (basic residues); the sequence is AKITIRRKKKV. The tract at residues 102–189 is disordered; the sequence is AKITIRRKKK…QPAKPTKVTL (88 aa). Residues 123-136 are compositionally biased toward acidic residues; sequence PVSDNEDDSYDEEV. At S125 the chain carries Phosphoserine. Residue Y132 is modified to Phosphotyrosine. The span at 149 to 175 shows a compositional bias: basic and acidic residues; that stretch reads RRSEKSWARDRSASRERSLSPRSDRRS. Phosphoserine is present on residues S175, S178, and S179. Residue T185 is modified to Phosphothreonine. In terms of domain architecture, PDZ 2 spans 186 to 264; the sequence is KVTLVKSRKN…KLKMVVQRDE (79 aa). S212 and S241 each carry phosphoserine. A Phosphothreonine modification is found at T267. 13 positions are modified to phosphoserine: S275, S277, S280, S284, S290, S294, S297, S300, S323, S329, S334, S337, and S353. A disordered region spans residues 296–364; sequence ASDHSGRSHD…PVKHVDDHPP (69 aa). A compositionally biased stretch (basic and acidic residues) spans 299–308; sequence HSGRSHDRPP. Residues 325–338 show a composition bias toward polar residues; sequence HSTQSPQQPSNGSL. Position 354 is a phosphothreonine (T354). The 82-residue stretch at 421–502 folds into the PDZ 3 domain; that stretch reads SMKLVKFRKG…GEEVTILAQK (82 aa). The SH3 domain maps to 516–584; the sequence is GDSFYIRTHF…PNKNRAEQLA (69 aa). Residues 610–791 enclose the Guanylate kinase-like domain; that stretch reads SKRNLRKSRE…WYGALKEAIQ (182 aa). Residues S617 and S622 each carry the phosphoserine modification. The occludin (OCLN)-binding region stretch occupies residues 633-876; that stretch reads YERVVLREAG…GTPPESAITR (244 aa). T809 is subject to Phosphothreonine. Residues S810 and S821 each carry the phosphoserine modification. A Phosphotyrosine modification is found at Y822. Phosphoserine occurs at positions 824, 828, and 837. 2 disordered regions span residues 825–944 and 956–1042; these read APGS…SASA and LEEP…YEPQ. Residues T846, T848, T854, T861, and T868 each carry the phosphothreonine modification. A compositionally biased stretch (basic and acidic residues) spans 879-892; it reads EPVREDSSGMHHEN. Low complexity predominate over residues 893-906; it reads QTYPPYSPQAQPQA. Phosphoserine is present on S912. A compositionally biased stretch (basic and acidic residues) spans 998–1014; it reads DPAKVYRKEPYSEEMMR. Phosphoserine is present on S1071. The tract at residues 1090-1586 is disordered; sequence QWSYYDDKQP…STQPPEFDSG (497 aa). A compositionally biased stretch (basic and acidic residues) spans 1106–1124; the sequence is ENQHPRDLDSRQHPEEASE. S1138 is modified (phosphoserine). Residues Y1139 and Y1164 each carry the phosphotyrosine modification. Positions 1150–1370 are actin-binding region (ABR); that stretch reads RTSTLRHEEQ…FDRRSFESKP (221 aa). Basic and acidic residues-rich tracts occupy residues 1268-1285 and 1335-1346; these read KMFE…KDVN and PPEDIVRSNHYD. Y1353 is subject to Phosphotyrosine. S1365 carries the post-translational modification Phosphoserine. Over residues 1388-1399 the composition is skewed to low complexity; that stretch reads SQSQPNFSSYSS. Residues 1401–1418 are compositionally biased toward basic and acidic residues; sequence GKPETDAVDRSFSEKRYD. S1411 bears the Phosphoserine mark. Residues 1431-1445 are compositionally biased toward low complexity; the sequence is SQYSQPAPPLSSSSL. 2 stretches are compositionally biased toward polar residues: residues 1455–1468 and 1510–1519; these read EGNS…NSYM and AEQTQKTITP. The span at 1535–1544 shows a compositional bias: basic and acidic residues; it reads PFERKFESPK. The residue at position 1542 (S1542) is a Phosphoserine. Residues 1561 to 1580 show a composition bias toward polar residues; it reads SSKTPTSPKTLMKAHSSTQP. The residue at position 1614 (S1614) is a Phosphoserine. The region spanning 1631-1745 is the ZU5 domain; it reads ATARGIFNSN…NCVSVLIDHF (115 aa).

This sequence belongs to the MAGUK family. As to quaternary structure, homodimer. Forms heterodimers TJP3. Forms a heterodimer (via PDZ2 domain) with TJP2/ZO2 (via PDZ2 domain). Interacts with OCLN, CALM, claudins, CGN/cingulin, CXADR, GJD3 and UBN1. Interacts (via ZU5 domain) with CDC42BPB. Interacts (via PDZ domain) with GJA1. Interacts (via PDZ domains) with ANKRD2. Interacts with POPDC1 (via the C-terminus cytoplasmic tail). Interacts with GJA12 and KIRREL1. Interacts with HSPA4. Interacts (via ZU5 domain) with MYZAP. Interacts with DLL1. Interacts with USP53 (via the C-terminal region). Interacts with DNMBP (via C-terminal domain); required for the apical cell-cell junction localization of DNMBP. Interacts with SPEF1. Interacts (via N-terminus) with CTNNA1. Interacts with CLDN18. Interacts with CLDN16 (via TRV motif); this is a prerequisite for anchoring of CLDN16 at the tight junction. Interacts with PKP1; the interaction facilitates TJP1/ZO-1 localization to the plasma membrane. Interacts with PATJ (via PDZ1-6 domains); the interaction is required for attachment and extension of TJP1/ZO1 condensates along the apical cell interface. Post-translationally, phosphorylated at tyrosine redidues in response to epidermal growth factor (EGF). This response is dependent on an intact actin microfilament system. Dephosphorylated by PTPRJ. As to expression, expressed between ameloblasts, at ameloblast-ameloblast junctions and in the stratum intermedium during pre-secretory and secretory stages of tooth development (at protein level).

It is found in the cell membrane. The protein localises to the cell junction. The protein resides in the tight junction. It localises to the gap junction. Its subcellular location is the cytoplasm. It is found in the myofibril. The protein localises to the sarcomere. The protein resides in the i band. Its function is as follows. Tjp1, TjpP2, and Tjp3 are closely related scaffolding proteins that link tight junction (TJ) transmembrane proteins such as claudins, junctional adhesion molecules, and occludin to the actin cytoskeleton. Forms a multistranded TJP1/ZO1 condensate which elongates to form a tight junction belt, the belt is anchored at the apical cell membrane via interaction with PATJ. The tight junction acts to limit movement of substances through the paracellular space and as a boundary between the compositionally distinct apical and basolateral plasma membrane domains of epithelial and endothelial cells. Necessary for lumenogenesis, and particularly efficient epithelial polarization and barrier formation. Plays a role in the regulation of cell migration by targeting Cdc42bpb to the leading edge of migrating cells. Plays an important role in podosome formation and associated function, thus regulating cell adhesion and matrix remodeling. With Tjp2 and TJjp3, participates in the junctional retention and stability of the transcription factor Dbpa, but is not involved in its shuttling to the nucleus. May play a role in mediating cell morphology changes during ameloblast differentiation via its role in tight junctions. This chain is Tight junction protein 1, found in Mus musculus (Mouse).